The chain runs to 266 residues: Adaptin ear-binding coat-associated protein 2 (266 aa).

2 disordered regions span residues 164 to 191 and 244 to 266; these read SMKK…LPPP and GDFT…WVQF. The residue at position 181 (Ser181) is a Phosphoserine. A WXXF motif 1 motif is present at residues 243-246; that stretch reads WGDF. The segment covering 247–258 has biased composition (low complexity); the sequence is TKSTGSTSSQTQ. The short motif at 263–266 is the WXXF motif 2 element; it reads WVQF.

Belongs to the NECAP family. Interacts with AP1G1 and AP2A1 components of the adapter protein complexes AP-1 and AP-2. Interacts with the GAE domain proteins GGA1, GGA2 and GGA3.

Its subcellular location is the cytoplasmic vesicle. The protein localises to the clathrin-coated vesicle membrane. It is found in the cell membrane. In terms of biological role, involved in endocytosis. The chain is Adaptin ear-binding coat-associated protein 2 (NECAP2) from Bos taurus (Bovine).